The chain runs to 408 residues: Cytochrome P450 55A3 (408 aa).

A heme-binding site is contributed by cysteine 357.

Belongs to the cytochrome P450 family. Heme serves as cofactor.

This is Cytochrome P450 55A3 (CYP55A3) from Fusarium lichenicola (Cylindrocarpon lichenicola).